We begin with the raw amino-acid sequence, 702 residues long: MKHRANGIDLFRIFAATMVVAIHTFPFQSIAPFLDEVITLTVFRVAVPFFFMITGYFLLGRLSLNFSYNNNQRVKKYLYKIGMIYLYSILLYFPLSLLNGTISLKMNILLLLKVFIFDGTFYHLWYFPASIIGTILVTLLLRSIGFKLTVAFSTCLYLVGLGGDSWYGITNQVPLLNKLYTFIFSWSDYTRSGVFFTPVFLCLGIFAYRVSKKLTASKILNLLFYVFIIGMTFESIFLHRFTNVKHDSMYLLLPSCALILFLMLLNWQPKLKVKESADLTLLVYILHPLVIVIVHSISKYIPILKNSLLNFLLVVVCSFILAQLLLNLKRKLRVSKQKIPFERASKEISASAIHHNINEIRKIIPKNTNIMGVVKANAYGCGMVEVAYELEKIGISFFCVATIEEAIALRKSGNQGDILILGYTHPNRINDIKKYNLIQSIVSEEHGKVLNLKKIPIRCHLQVDTGMHRLGVTPNVTIIQQMYLFSNLKIEGIYSHLGSSDSLEQESIARTNTQIFLFNNILSDLEQMGISYGYTHIQSSYGILNYPELSFDFVRIGILCYGFLSDYNSPTKIPIDLQPIVKVKASLITERIVEAGEYVGYGLGAKVEKRTRIGVVSIGYADGIPRALSNAKLTLEFKGQSIKQIGNICMDMMLVDLSEVEDISLNDELIVLPNISKIADEEQTITNELLSRLGSRLGTELN.

Topologically, residues 1–12 (MKHRANGIDLFR) are cytoplasmic. Residues 13–33 (IFAATMVVAIHTFPFQSIAPF) traverse the membrane as a helical segment. The Extracellular portion of the chain corresponds to 34–39 (LDEVIT). The chain crosses the membrane as a helical span at residues 40–60 (LTVFRVAVPFFFMITGYFLLG). The Cytoplasmic portion of the chain corresponds to 61–77 (RLSLNFSYNNNQRVKKY). The chain crosses the membrane as a helical span at residues 78-98 (LYKIGMIYLYSILLYFPLSLL). Topologically, residues 99–120 (NGTISLKMNILLLLKVFIFDGT) are extracellular. A helical transmembrane segment spans residues 121 to 141 (FYHLWYFPASIIGTILVTLLL). Residue Arg142 is a topological domain, cytoplasmic. A helical transmembrane segment spans residues 143–163 (SIGFKLTVAFSTCLYLVGLGG). At 164 to 191 (DSWYGITNQVPLLNKLYTFIFSWSDYTR) the chain is on the extracellular side. Residues 192–212 (SGVFFTPVFLCLGIFAYRVSK) form a helical membrane-spanning segment. Residues 213–218 (KLTASK) are Cytoplasmic-facing. A helical transmembrane segment spans residues 219–239 (ILNLLFYVFIIGMTFESIFLH). The Extracellular segment spans residues 240 to 248 (RFTNVKHDS). Residues 249-269 (MYLLLPSCALILFLMLLNWQP) traverse the membrane as a helical segment. Residues 270-276 (KLKVKES) lie on the Cytoplasmic side of the membrane. The chain crosses the membrane as a helical span at residues 277 to 297 (ADLTLLVYILHPLVIVIVHSI). Residues 298–307 (SKYIPILKNS) lie on the Extracellular side of the membrane. A helical membrane pass occupies residues 308–328 (LLNFLLVVVCSFILAQLLLNL). Residues 329-702 (KRKLRVSKQK…LGSRLGTELN (374 aa)) are Cytoplasmic-facing. The interval 337 to 702 (QKIPFERASK…LGSRLGTELN (366 aa)) is racemase. Lys375 serves as the catalytic Proton acceptor. At Lys375 the chain carries N6-(pyridoxal phosphate)lysine. Arg469 contacts substrate. The Proton acceptor role is filled by Tyr601. Substrate is bound at residue Met650.

The protein in the N-terminal section; belongs to the acyltransferase 3 family. It in the C-terminal section; belongs to the alanine racemase family. Requires pyridoxal 5'-phosphate as cofactor.

Its subcellular location is the cell membrane. This chain is Amino-acid racemase (vanTE), found in Enterococcus faecalis (Streptococcus faecalis).